Reading from the N-terminus, the 314-residue chain is 2,3-dihydroxyphenylpropionate/2,3-dihydroxicinnamic acid 1,2-dioxygenase 2 (314 aa).

Histidine 115 serves as the catalytic Proton donor. The Proton acceptor role is filled by histidine 179.

Belongs to the LigB/MhpB extradiol dioxygenase family. As to quaternary structure, homotetramer. It depends on Fe(2+) as a cofactor.

The enzyme catalyses 3-(2,3-dihydroxyphenyl)propanoate + O2 = (2Z,4E)-2-hydroxy-6-oxonona-2,4-dienedioate + H(+). It carries out the reaction (2E)-3-(2,3-dihydroxyphenyl)prop-2-enoate + O2 = (2Z,4E,7E)-2-hydroxy-6-oxonona-2,4,7-trienedioate + H(+). It functions in the pathway aromatic compound metabolism; 3-phenylpropanoate degradation. Its function is as follows. Catalyzes the non-heme iron(II)-dependent oxidative cleavage of 2,3-dihydroxyphenylpropionic acid and 2,3-dihydroxicinnamic acid into 2-hydroxy-6-ketononadienedioate and 2-hydroxy-6-ketononatrienedioate, respectively. The chain is 2,3-dihydroxyphenylpropionate/2,3-dihydroxicinnamic acid 1,2-dioxygenase 2 (mhpB2) from Pseudomonas putida (Arthrobacter siderocapsulatus).